Reading from the N-terminus, the 754-residue chain is 1,4-alpha-glucan branching enzyme GlgB (754 aa).

Residue Asp431 is the Nucleophile of the active site. Glu484 serves as the catalytic Proton donor.

This sequence belongs to the glycosyl hydrolase 13 family. GlgB subfamily. Monomer.

The enzyme catalyses Transfers a segment of a (1-&gt;4)-alpha-D-glucan chain to a primary hydroxy group in a similar glucan chain.. It functions in the pathway glycan biosynthesis; glycogen biosynthesis. Its function is as follows. Catalyzes the formation of the alpha-1,6-glucosidic linkages in glycogen by scission of a 1,4-alpha-linked oligosaccharide from growing alpha-1,4-glucan chains and the subsequent attachment of the oligosaccharide to the alpha-1,6 position. The sequence is that of 1,4-alpha-glucan branching enzyme GlgB from Prochlorococcus marinus (strain MIT 9515).